A 454-amino-acid chain; its full sequence is Gustatory and odorant receptor 21a (454 aa).

Residues 1-114 (MTFLDRTMSF…LPRTGYSWGS (114 aa)) are Cytoplasmic-facing. Residues 115–135 (KQVMWAIFIYSCQTTIVVLVL) form a helical membrane-spanning segment. The Extracellular segment spans residues 136–153 (RERVKKFVTSPDKRFDEA). A helical membrane pass occupies residues 154-174 (IYNVIFISLLFTNFLLPVASW). The Cytoplasmic portion of the chain corresponds to 175–206 (RHGPQVAIFKNMWTNYQYKFFKTTGSPIVFPN). Residues 207 to 227 (LYPLTWSLCVFSWLLSIAINL) traverse the membrane as a helical segment. The Extracellular portion of the chain corresponds to 228–237 (SQYFLQPDFR). Residues 238-258 (LWYTFAYYPIIAMLNCFCSLW) form a helical membrane-spanning segment. At 259–312 (YINCNAFGTASRALSDALQTTIRGEKPAQKLTEYRHLWVDLSHMMQQLGRAYSN) the chain is on the cytoplasmic side. The helical transmembrane segment at 313–333 (MYGMYCLVIFFTTIIATYGSI) threads the bilayer. Topologically, residues 334–345 (SEIIDHGATYKE) are extracellular. A helical transmembrane segment spans residues 346-366 (VGLFVIVFYCMGLLYIICNEA). Topologically, residues 367–422 (HYASRKVGLDFQTKLLNINLTAVDAATQKEVEMLLVAINKNPPIMNLDGYANINRE) are cytoplasmic. A helical membrane pass occupies residues 423 to 443 (LITTNISFMATYLVVLLQFKI). The Extracellular segment spans residues 444–454 (TEQRRIGQQQA).

Belongs to the insect chemoreceptor superfamily. Gustatory receptor (GR) family. Gr21a subfamily. In terms of assembly, gr21a and Gr63a probably form a heterodimer that responds to CO(2). In terms of tissue distribution, expressed in the adult labellar chemosensory neurons. Carbon dioxide-responsive neurons coexpress Gr21a and Gr63a in a pair of chemosensory receptors at both larval and adult life stages. A single bilateral neuron, expressing the Gr21a receptor, is responsible for CO(2) detection in larvae.

It is found in the cell membrane. Gustatory and odorant receptor which mediates acceptance or avoidance behavior, depending on its substrates. Gr21a and Gr63a together are sufficient for carbon dioxide detection and avoidance behavior. It is possible that the CO(2) receptors Gr63a and Gr21a activate the TRPC channels through Galpha49B and Plc21C. This innate olfactory avoidance behavior can be inhibited by inhibitory interactions of the odors such as 1-hexanol and 2,3-butanedione with Gr21a and Gr63a. The polypeptide is Gustatory and odorant receptor 21a (Gr21a) (Drosophila melanogaster (Fruit fly)).